A 60-amino-acid chain; its full sequence is MAVPARRTSKTRKRNRRGHIKLTTPGLAPCPNCGELRVSHRVCPSCGYYNGKQVIDVKAN.

The protein belongs to the bacterial ribosomal protein bL32 family.

The chain is Large ribosomal subunit protein bL32 from Pediococcus pentosaceus (strain ATCC 25745 / CCUG 21536 / LMG 10740 / 183-1w).